A 393-amino-acid polypeptide reads, in one-letter code: tRNA(Met) cytidine acetate ligase (393 aa).

Glycine 81, asparagine 142, and arginine 167 together coordinate ATP.

This sequence belongs to the TmcAL family.

It is found in the cytoplasm. The catalysed reaction is cytidine(34) in elongator tRNA(Met) + acetate + ATP = N(4)-acetylcytidine(34) in elongator tRNA(Met) + AMP + diphosphate. In terms of biological role, catalyzes the formation of N(4)-acetylcytidine (ac(4)C) at the wobble position of elongator tRNA(Met), using acetate and ATP as substrates. First activates an acetate ion to form acetyladenylate (Ac-AMP) and then transfers the acetyl group to tRNA to form ac(4)C34. The chain is tRNA(Met) cytidine acetate ligase from Bacillus cereus (strain 03BB102).